A 370-amino-acid chain; its full sequence is Protein commissureless 1 (370 aa).

The Extracellular portion of the chain corresponds to 1 to 136 (MISTTDYPTV…DADMHVIINY (136 aa)). Residues 108-131 (LRDRSEESGESSWWSQIFGDADMH) are required for vesicular localization. The helical transmembrane segment at 137–157 (LWIGVVSSLVILSLVFILFSC) threads the bilayer. At 158-370 (YFYRKFRTWK…CASLVVVVAA (213 aa)) the chain is on the cytoplasmic side. Short sequence motifs (PY-motif) lie at residues 220–223 (PPCY) and 229–232 (LPSY). The segment at 227–237 (TGLPSYDEALH) is interaction with Nedd4. The segment at 287 to 312 (VEEDKADSSSSTSASASPSSSESSNL) is disordered. Over residues 294–312 (SSSSTSASASPSSSESSNL) the composition is skewed to low complexity.

Belongs to the commissureless family. As to quaternary structure, interacts (probably via PY-motifs) with Nedd4 (via WW2 domain). Interacts with Robo. Post-translationally, ubiquitinated by Nedd4; which promotes endocytosis of the comm/robo complex and comm proteasomal degradation. Not ubiquitinated by Nedd4.

The protein localises to the cytoplasmic vesicle membrane. It is found in the cell membrane. Functionally, controls axon guidance across the CNS midline by preventing the delivery of Robo to the growth cone. The chain is Protein commissureless 1 from Drosophila melanogaster (Fruit fly).